The sequence spans 473 residues: MEHYEQARYAPAEGETNEPLLSENDQTTVSVDPSLPDDLTRDTVELPSLEEPELARHYVRLSQQNYGVDSGPYPLGSCTMKYNPRFTEDAAALPAAAVHPDRSETALQGTLAVMHDLQDYLGRIGGMDAVTLQPPAGAAGEFTGILIAEAYHEATDGGHRNEVIVPDAAHGTNFASAALGGYDVIELPSGDDGRVDLDALEAALGENTAALMLTNPNTLGLFERDIEPIAEMVHDAGGLLYYDGANLNALLGRARPGDMGFDIMHFNVHKTFATPHGGGGPGAGPVGVTDELAGFLPDPHVRQSAGGDYELYTPPRSIGKVHGFQGNWPVLVKAFAYIDRLGDSGLADASAKAVLNANYLADQLDYEIPLGPFHHEFVASAGDQDAADVAKRMLDYGVHPPTTKWPELVAEALMTEPTETESKRTLDDLADAFNAVAGDDDAALADAPSRTTARRIDQTAAARNPRLSWHDLD.

The interval 1 to 40 is disordered; it reads MEHYEQARYAPAEGETNEPLLSENDQTTVSVDPSLPDDLT. Residue K270 is modified to N6-(pyridoxal phosphate)lysine.

The protein belongs to the GcvP family. C-terminal subunit subfamily. The glycine cleavage system is composed of four proteins: P, T, L and H. In this organism, the P 'protein' is a heterodimer of two subunits. Requires pyridoxal 5'-phosphate as cofactor.

It catalyses the reaction N(6)-[(R)-lipoyl]-L-lysyl-[glycine-cleavage complex H protein] + glycine + H(+) = N(6)-[(R)-S(8)-aminomethyldihydrolipoyl]-L-lysyl-[glycine-cleavage complex H protein] + CO2. In terms of biological role, the glycine cleavage system catalyzes the degradation of glycine. The P protein binds the alpha-amino group of glycine through its pyridoxal phosphate cofactor; CO(2) is released and the remaining methylamine moiety is then transferred to the lipoamide cofactor of the H protein. In Halobacterium salinarum (strain ATCC 700922 / JCM 11081 / NRC-1) (Halobacterium halobium), this protein is Probable glycine dehydrogenase (decarboxylating) subunit 2.